Reading from the N-terminus, the 402-residue chain is Thyroid hormone receptor alpha (402 aa).

Residues 1–22 are disordered; the sequence is MEQKPSTLDPLSEPEDTRWLDG. The modulating stretch occupies residues 1–50; that stretch reads MEQKPSTLDPLSEPEDTRWLDGKRKRKSSQCLVKSSMSGYIPSYLDKDEQ. Serine 12 carries the phosphoserine; by CK2 modification. Phosphoserine is present on serine 28. Zn(2+)-binding residues include cysteine 51, cysteine 54, cysteine 68, cysteine 71, cysteine 89, cysteine 95, cysteine 105, and cysteine 108. 2 consecutive NR C4-type zinc fingers follow at residues 51–71 and 89–113; these read CVVC…CEGC and CKYD…FKKC. Positions 51 to 125 form a DNA-binding region, nuclear receptor; sequence CVVCGDKATG…VGMAMDLVLD (75 aa). The NR LBD domain occupies 161-402; that stretch reads EEWELIHVVT…ELFPPLFLEV (242 aa). 2 residues coordinate 3,3',5-triiodo-L-thyronine: arginine 226 and serine 275.

It belongs to the nuclear hormone receptor family. NR1 subfamily. In terms of assembly, probably interacts with SFPQ.

It is found in the nucleus. Its function is as follows. Nuclear hormone receptor that can act as a repressor or activator of transcription. High affinity receptor for thyroid hormones, including triiodothyronine and thyroxine. In Aptenodytes patagonicus (King penguin), this protein is Thyroid hormone receptor alpha (THRA).